We begin with the raw amino-acid sequence, 179 residues long: Large ribosomal subunit protein uL6 (179 aa).

This sequence belongs to the universal ribosomal protein uL6 family. Part of the 50S ribosomal subunit.

Its function is as follows. This protein binds to the 23S rRNA, and is important in its secondary structure. It is located near the subunit interface in the base of the L7/L12 stalk, and near the tRNA binding site of the peptidyltransferase center. This Finegoldia magna (strain ATCC 29328 / DSM 20472 / WAL 2508) (Peptostreptococcus magnus) protein is Large ribosomal subunit protein uL6.